Consider the following 516-residue polypeptide: Gamma-aminobutyrate transaminase 1, mitochondrial (516 aa).

The N-terminal 47 residues, 1 to 47, are a transit peptide targeting the mitochondrion; sequence MVIARGLLRSNASSSSSQAINLLKYVTSTGSLQGHTQNLCDASTRHF. Residues 45–60 show a composition bias toward polar residues; that stretch reads RHFSSVPSPQSNSTEE. The interval 45–64 is disordered; the sequence is RHFSSVPSPQSNSTEENGFK. A pyridoxal 5'-phosphate-binding site is contributed by 171–172; the sequence is GS. Tyr204 is a substrate binding site. Residue Asp311 coordinates pyridoxal 5'-phosphate. Lys340 contacts substrate. Lys340 bears the N6-(pyridoxal phosphate)lysine mark.

The protein belongs to the class-III pyridoxal-phosphate-dependent aminotransferase family.

Its subcellular location is the mitochondrion. The catalysed reaction is 4-aminobutanoate + pyruvate = succinate semialdehyde + L-alanine. It carries out the reaction 4-aminobutanoate + glyoxylate = succinate semialdehyde + glycine. In terms of biological role, transaminase that degrades gamma-amino butyric acid (GABA) and uses pyruvate as amino-group acceptor, but not 2-oxoglutarate. In Oryza sativa subsp. indica (Rice), this protein is Gamma-aminobutyrate transaminase 1, mitochondrial.